Consider the following 177-residue polypeptide: O-acetyl-ADP-ribose deacetylase (177 aa).

Residues 1-175 (MKTRIHVVQG…LYERLLTQQG (175 aa)) form the Macro domain. Substrate-binding positions include 11-12 (DI), Asn25, 33-35 (GVD), and 122-126 (STGVY). The active-site Proton acceptor is Asp35.

This sequence belongs to the MacroD-type family. YmdB subfamily. In terms of assembly, homodimer. Interacts with RNase III.

It catalyses the reaction 3''-O-acetyl-ADP-D-ribose + H2O = ADP-D-ribose + acetate + H(+). It carries out the reaction 2''-O-acetyl-ADP-D-ribose + H2O = ADP-D-ribose + acetate + H(+). Functionally, deacetylates O-acetyl-ADP ribose to yield ADP-ribose and free acetate. Down-regulates ribonuclease 3 (RNase III) activity. Acts by interacting directly with the region of the ribonuclease that is required for dimerization/activation. This Shigella dysenteriae serotype 1 (strain Sd197) protein is O-acetyl-ADP-ribose deacetylase.